Reading from the N-terminus, the 1155-residue chain is PAN2-PAN3 deadenylation complex catalytic subunit pan2 (1155 aa).

WD repeat units lie at residues 102-145 (THED…DKLP) and 276-315 (ANVS…HFNE). Residues 316–452 (MSKEVEFADV…GTKLNGEAED (137 aa)) form a linker region. The 370-residue stretch at 453–822 (DPLLKYSNVE…VPCVLAYQVK (370 aa)) folds into the USP domain. Residues 871–1049 (VALDTEFVDL…IEDARMALRL (179 aa)) enclose the Exonuclease domain. Positions 874, 876, 983, and 1042 each coordinate a divalent metal cation. Positions 1095–1155 (TAVTMQNNSG…GDFFGGSPLK (61 aa)) are disordered. Residues 1097 to 1106 (VTMQNNSGRN) show a composition bias toward polar residues. Residues 1107 to 1124 (TPSTPEVTAPTASAPTTP) show a composition bias toward low complexity.

This sequence belongs to the peptidase C19 family. PAN2 subfamily. As to quaternary structure, forms a heterotrimer with an asymmetric homodimer of the regulatory subunit pan3 to form the poly(A)-nuclease (PAN) deadenylation complex. It depends on a divalent metal cation as a cofactor.

It is found in the cytoplasm. The catalysed reaction is Exonucleolytic cleavage of poly(A) to 5'-AMP.. With respect to regulation, positively regulated by the regulatory subunit pan3. Its function is as follows. Catalytic subunit of the poly(A)-nuclease (PAN) deadenylation complex, one of two cytoplasmic mRNA deadenylases involved in mRNA turnover. PAN specifically shortens poly(A) tails of RNA and the activity is stimulated by poly(A)-binding protein pab1. PAN deadenylation is followed by rapid degradation of the shortened mRNA tails by the CCR4-NOT complex. Deadenylated mRNAs are then degraded by two alternative mechanisms, namely exosome-mediated 3'-5' exonucleolytic degradation, or deadenylation-dependent mRNA decaping and subsequent 5'-3' exonucleolytic degradation by xrn1. May also be involved in post-transcriptional maturation of mRNA poly(A) tails. The polypeptide is PAN2-PAN3 deadenylation complex catalytic subunit pan2 (Aspergillus oryzae (strain ATCC 42149 / RIB 40) (Yellow koji mold)).